We begin with the raw amino-acid sequence, 417 residues long: MGTQKPRILPWLISQLDRGELEGVAWLGESRTRFRIPWKHGLRQDAQQEDFGIFQAWAVASGAYTPGKDKPDLPTWKRNFRSALNRKEVLRLAEDHSKDSQDPHKIYEFVNSGVRDIPEPDTSQDNGRHNTSDTQEDTLEKLLSDMDLSPGGPSNLTMASEKPPQFLQSPDSDIPALCPNSGLSENPLKQLLANEEDWEFEVTAFYRGCQVFQQTVFCPGGLRLVGSEAGDRMLPGQPIRLPDPATSLTDKSVTDYVQRVLSCLGGGLALWRAGQWLCAQRLGHCHVYWAIGEELLPSCGHKPDGEVPKDREGGVFNLGPFITDLITFIEGSRRSPLYTLWFCVGQSWPQDQPWIKRLVMVKVVPMCLRVLVDIARQGGASSLENTVDLHISNSDPLSLTPDQYMACLQDLAEDMDF.

Threonine 3 is modified (phosphothreonine). Positions 5–111 form a DNA-binding region, IRF tryptophan pentad repeat; sequence KPRILPWLIS…DPHKIYEFVN (107 aa). A Phosphoserine modification is found at serine 14. Threonine 75 bears the Phosphothreonine mark. Serine 97 and serine 123 each carry phosphoserine. 2 disordered regions span residues 111–134 and 147–170; these read NSGV…TSDT and DLSP…LQSP. Positions 140–417 are mediates interaction with ZDHHC11; the sequence is EKLLSDMDLS…LQDLAEDMDF (278 aa). Serine 184 is modified (phosphoserine). A Glycyl lysine isopeptide (Lys-Gly) (interchain with G-Cter in ISG15) cross-link involves residue lysine 189. Positions 196-356 are interaction with HERC5; sequence EDWEFEVTAF…SWPQDQPWIK (161 aa). A Phosphothreonine modification is found at threonine 249. Cysteines 263 and 285 form a disulfide. Glycyl lysine isopeptide (Lys-Gly) (interchain with G-Cter in ISG15) cross-links involve residues lysine 356 and lysine 362. Lysine 362 is modified (N6-acetyllysine). At serine 381 the chain carries Phosphoserine. Serine 382 is subject to Diphosphoserine. Serine 382 carries the phosphoserine; by TBK1 modification. A Phosphoserine; by IKKE modification is found at serine 392. Serine 394 bears the Phosphoserine mark. Threonine 400 carries the post-translational modification Phosphothreonine.

It belongs to the IRF family. As to quaternary structure, monomer. Homodimer; phosphorylation-induced. Interacts (when phosphorylated) with CREBBP. Interacts with MAVS (via phosphorylated pLxIS motif). Interacts with TICAM1 (via phosphorylated pLxIS motif). Interacts with STING1 (via phosphorylated pLxIS motif). Interacts with IKBKE and TBK1. Interacts with TICAM2. Interacts with RBCK1. Interacts with HERC5. Interacts with DDX3X; the interaction allows the phosphorylation and activation of IRF3 by IKBKE. Interacts with TRIM21 and ULK1, in the presence of TRIM21; this interaction leads to IRF3 degradation by autophagy. Interacts with RIOK3; RIOK3 probably mediates the interaction of TBK1 with IRF3. Interacts with ILRUN; the interaction inhibits IRF3 binding to its DNA consensus sequence. Interacts with LYAR; this interaction impairs IRF3 DNA-binding activity. Interacts with TRAF3. Interacts with ZDHHC11; ZDHHC11 recruits IRF3 to STING1 upon DNA virus infection and thereby promotes IRF3 activation. Interacts with HSP90AA1; the interaction mediates IRF3 association with TOMM70. Interacts with BCL2; the interaction decreases upon Sendai virus infection. Interacts with BAX; the interaction is direct, increases upon virus infection and mediates the formation of the apoptosis complex TOMM70:HSP90AA1:IRF3:BAX. Interacts with DDX56. Interacts with NBR1. Constitutively phosphorylated on many Ser/Thr residues. Activated following phosphorylation by TBK1 and IKBKE. Innate adapter proteins, such as MAVS, STING1 or TICAM1, are first activated by viral RNA, cytosolic DNA, and bacterial lipopolysaccharide (LPS), respectively, leading to activation of the kinases TBK1 and IKBKE. These kinases then phosphorylate the adapter proteins on the pLxIS motif, leading to recruitment of IRF3, thereby licensing IRF3 for phosphorylation by TBK1. Phosphorylation at Ser-382 is followed by pyrophosphorylation at the same residue, promoting phosphorylation at Ser-392. Phosphorylated IRF3 dissociates from the adapter proteins, dimerizes, and then enters the nucleus to induce IFNs. In terms of processing, pyrophosphorylated by UAP1 following phosphorylation at Ser-382 by TBK1. Pyrophosphorylation promotes subsequent phosphorylation at Ser-392, leading to homodimerization of IRF3. Post-translationally, acetylation at Lys-362 by KAT8 inhibits recruimtent to promoters and transcription factor activity. Acetylation by KAT8 is promoted by phosphorylation at Ser-392. Ubiquitinated; ubiquitination involves RBCK1 leading to proteasomal degradation. Polyubiquitinated; ubiquitination involves TRIM21 leading to proteasomal degradation. Ubiquitinated by UBE3C, leading to its degradation. Deubiquitinated by USP5 on both 'Lys-48'-linked unanchored and 'Lys-63'-linked anchored polyubiquitin, leading to inhibition of anti-RNA viral innate immunity. In terms of processing, ISGylated by HERC5 resulting in sustained IRF3 activation and in the inhibition of IRF3 ubiquitination by disrupting PIN1 binding. The phosphorylation state of IRF3 does not alter ISGylation. Post-translationally, proteolytically cleaved by apoptotic caspases during apoptosis, leading to its inactivation. Cleavage by CASP3 during virus-induced apoptosis inactivates it, preventing cytokine overproduction.

The protein localises to the cytoplasm. It is found in the nucleus. It localises to the mitochondrion. Its activity is regulated as follows. In the absence of viral infection, maintained as a monomer in an autoinhibited state. Phosphorylation by TBK1 and IKBKE disrupts this autoinhibition leading to the liberation of the DNA-binding and dimerization activities and its nuclear localization where it can activate type I IFN and ISG genes. Phosphorylation and activation follow the following steps: innate adapter proteins, such as MAVS, STING1 or TICAM1, are first activated by viral RNA, cytosolic DNA and bacterial lipopolysaccharide (LPS), respectively, leading to activation of the kinases TBK1 and IKBKE. These kinases then phosphorylate the adapter proteins on their pLxIS motif, leading to recruitment of IRF3, thereby licensing IRF3 for phosphorylation by TBK1. Phosphorylated IRF3 dissociates from the adapter proteins, dimerizes, and then enters the nucleus to induce IFNs. Functionally, key transcriptional regulator of type I interferon (IFN)-dependent immune responses which plays a critical role in the innate immune response against DNA and RNA viruses. Regulates the transcription of type I IFN genes (IFN-alpha and IFN-beta) and IFN-stimulated genes (ISG) by binding to an interferon-stimulated response element (ISRE) in their promoters. Acts as a more potent activator of the IFN-beta (IFNB) gene than the IFN-alpha (IFNA) gene and plays a critical role in both the early and late phases of the IFNA/B gene induction. Found in an inactive form in the cytoplasm of uninfected cells and following viral infection, double-stranded RNA (dsRNA), or toll-like receptor (TLR) signaling, is phosphorylated by IKBKE and TBK1 kinases. This induces a conformational change, leading to its dimerization and nuclear localization and association with CREB binding protein (CREBBP) to form dsRNA-activated factor 1 (DRAF1), a complex which activates the transcription of the type I IFN and ISG genes. Can activate distinct gene expression programs in macrophages and can induce significant apoptosis in primary macrophages. In Bos taurus (Bovine), this protein is Interferon regulatory factor 3 (IRF3).